Consider the following 596-residue polypeptide: M-phase inducer phosphatase (596 aa).

Residues S99 and S178 each carry the phosphoserine modification. The tract at residues 174–221 (LSSSSFDSYLRPNVSRSRSSGNAPPFLRSRSSSSYSINKKKGTSGGQA) is disordered. Residues 429–533 (IFDKCIIIDC…FYENHKNRCD (105 aa)) form the Rhodanese domain. Residue C480 is the Phosphocysteine intermediate of the active site.

This sequence belongs to the MPI phosphatase family. As to quaternary structure, interacts with rad24 during G2 in a srk1-dependent manner; the interaction is increased during osmostress. In terms of processing, phosphorylated by srk1 in the N-terminus; phosphorylation promotes nuclear exclusion.

It is found in the cytoplasm. The protein resides in the nucleus. It catalyses the reaction O-phospho-L-tyrosyl-[protein] + H2O = L-tyrosyl-[protein] + phosphate. Tyrosine protein phosphatase which functions as a dosage-dependent inducer of mitotic and meiotic progression. Directly dephosphorylates cdc2 and stimulates its kinase activity. Required for the G2/M transition of the cell cycle. Required for induction of meiosis II. This is M-phase inducer phosphatase from Schizosaccharomyces pombe (strain 972 / ATCC 24843) (Fission yeast).